The sequence spans 1670 residues: Collagen alpha-3(IV) chain (1670 aa).

A signal peptide spans 1–28; sequence MSARTAPRPQVLLLPLLLVLLAAAPAAS. The segment at 29-42 is 7S domain; the sequence is KGCVCKDKGQCFCD. Residues 43–1438 are triple-helical region; sequence GAKGEKGEKG…KGKRGDSGSP (1396 aa). Disordered stretches follow at residues 49–78, 167–469, and 502–1442; these read GEKG…QGPK, LDAK…DGPK, and GRQG…ATWT. Pro residues predominate over residues 176-200; that stretch reads PGAPGPQGLPGPPGFPGPVGPPGPP. The segment covering 202–212 has biased composition (low complexity); sequence FFGFPGAMGPR. A compositionally biased stretch (basic and acidic residues) spans 217–231; that stretch reads HMGERVIGHKGERGV. The span at 242–251 shows a compositional bias: low complexity; sequence GTVIVTLTGP. N-linked (GlcNAc...) asparagine glycosylation is present at N253. The span at 253–266 shows a compositional bias: basic and acidic residues; the sequence is NRTDLKGEKGDKGA. Residues 382–394 are compositionally biased toward low complexity; sequence SPGSSRPGLRGAP. The span at 402–411 shows a compositional bias: basic and acidic residues; it reads SKGERGRPGK. The segment covering 415–428 has biased composition (low complexity); that stretch reads GTPGSPGCAGSPGL. Composition is skewed to pro residues over residues 429 to 438, 598 to 618, and 654 to 675; these read PGSPGPPGPP, PGDP…PPGY, and VPGP…PPGI. The Cell attachment site signature appears at 791 to 793; that stretch reads RGD. A compositionally biased stretch (pro residues) spans 900–909; sequence IGPPGPPGNP. Positions 974 to 987 are enriched in low complexity; that stretch reads VPGMPGLKGLKGLP. The short motif at 996 to 998 is the Cell attachment site element; it reads RGD. Composition is skewed to low complexity over residues 1013–1025, 1094–1105, and 1118–1133; these read IPGS…MPGS, LGPAGPEGAPGS, and HGDL…LGPP. The segment covering 1135-1148 has biased composition (pro residues); sequence IRGPPGLPGFPGSP. The short motif at 1154–1156 is the Cell attachment site element; that stretch reads RGD. Composition is skewed to low complexity over residues 1230 to 1250 and 1290 to 1299; these read PGAI…RGSP and PPGRLGAPGT. The short motif at 1306–1308 is the Cell attachment site element; the sequence is RGD. Over residues 1332–1341 the composition is skewed to pro residues; that stretch reads PPGPIGPKGP. Short sequence motifs (cell attachment site) lie at residues 1345 to 1347 and 1432 to 1434; these read RGD. Residues 1427–1444 form an epitope recognized by Goodpasture antibodies region; that stretch reads GLKGKRGDSGSPATWTTR. Residues 1445-1669 enclose the Collagen IV NC1 domain; that stretch reads GFVFTRHSQT…SRCQVCMKKR (225 aa). Cystine bridges form between C1460-C1551, C1493-C1548, C1505-C1511, C1570-C1665, C1604-C1662, and C1616-C1622. The segment at 1479-1557 is required for the anti-angiogenic activity of tumstatin; it reads NQRAHGQDLG…CTVCEGPAIA (79 aa). M1533 is covalently cross-linked (S-Lysyl-methionine sulfilimine (Met-Lys) (interchain with K-1651)). The segment at 1610–1628 is required for the anti-tumor cell activity of tumstatin; the sequence is ASPFLECHGRGTCNYYSNS. K1651 participates in a covalent cross-link: S-Lysyl-methionine sulfilimine (Lys-Met) (interchain with M-1533).

This sequence belongs to the type IV collagen family. In terms of assembly, there are six type IV collagen isoforms, alpha 1(IV)-alpha 6(IV), each of which can form a triple helix structure with 2 other chains to generate type IV collagen network. The alpha 3(IV) chain forms a triple helical protomer with alpha 4(IV) and alpha 5(IV); this triple helical structure dimerizes through NC1-NC1 domain interactions such that the alpha 3(IV), alpha 4(IV) and alpha 5(IV) chains of one protomer connect with the alpha 5(IV), alpha 4(IV) and alpha 3(IV) chains of the opposite promoter, respectively. Interacts with ITGB3. Associates with LAMB2 at the neuromuscular junction and in GBM. In terms of processing, prolines at the third position of the tripeptide repeating unit (G-X-Y) are hydroxylated in some or all of the chains. Isoform 2 contains an additional N-linked glycosylation site. Post-translationally, type IV collagens contain numerous cysteine residues which are involved in inter- and intramolecular disulfide bonding. 12 of these, located in the NC1 domain, are conserved in all known type IV collagens. In terms of processing, the trimeric structure of the NC1 domains is stabilized by covalent bonds between Lys and Met residues. Phosphorylated. Thought to be phosphorylated by CERT, but CERT does not have kinase activity. Alpha 3 and alpha 4 type IV collagens are colocalized and present in kidney, eye, basement membranes of lens capsule, cochlea, lung, skeletal muscle, aorta, synaptic fibers, fetal kidney and fetal lung. PubMed:8083201 reports similar levels of expression of alpha 3 and alpha 4 type IV collagens in kidney, but PubMed:7523402 reports that in kidney levels of alpha 3 type IV collagen are significantly lower than those of alpha 4 type IV collagen. According to PubMed:8083201, alpha 3 type IV collagen is not detected in heart, brain, placenta, liver, pancreas, extrasynaptic muscle fibers, endoneurial and perineurial nerves, fetal brain, fetal heart and fetal liver. According to PubMed:7523402, alpha 3 type IV collagen is strongly expressed in pancreas, neuroretina and calvaria and not expressed in adrenal, ileum and skin. Isoform 1 and isoform 3 are strongly expressed in kidney, lung, suprarenal capsule, muscle and spleen, in each of these tissues isoform 1 is more abundant than isoform 3. Isoform 1 and isoform 3 are expressed at low levels in artery, fat, pericardium and peripherical nerve, but not in placenta, mesangium, skin, pleura and cultured umbilical endothelial cells.

The protein resides in the secreted. Its subcellular location is the extracellular space. It is found in the extracellular matrix. The protein localises to the basement membrane. In terms of biological role, type IV collagen is the major structural component of glomerular basement membranes (GBM), forming a 'chicken-wire' meshwork together with laminins, proteoglycans and entactin/nidogen. Tumstatin, a cleavage fragment corresponding to the collagen alpha 3(IV) NC1 domain, possesses both anti-angiogenic and anti-tumor cell activity; these two anti-tumor properties may be regulated via RGD-independent ITGB3-mediated mechanisms. This is Collagen alpha-3(IV) chain (COL4A3) from Homo sapiens (Human).